The following is a 465-amino-acid chain: A-type ATP synthase subunit B (465 aa).

The protein belongs to the ATPase alpha/beta chains family. The A-type ATPase is composed of subunits A(3), B(3), C, D, E(1 or 2), F, H(2), I and proteolipid K(x).

It localises to the cell membrane. Functionally, component of the A-type ATP synthase that produces ATP from ADP in the presence of a proton gradient across the membrane. The B chain is a regulatory subunit. This Methanocaldococcus jannaschii (strain ATCC 43067 / DSM 2661 / JAL-1 / JCM 10045 / NBRC 100440) (Methanococcus jannaschii) protein is A-type ATP synthase subunit B.